We begin with the raw amino-acid sequence, 1551 residues long: Serine/threonine-protein kinase MRCK gamma (1551 aa).

In terms of domain architecture, Protein kinase spans 71–337 (FEILKVIGRG…LDDFRNHPFF (267 aa)). ATP contacts are provided by residues 77–85 (IGRGAFGEV) and Lys-100. Asp-195 (proton acceptor) is an active-site residue. Residues Ser-216 and Ser-228 each carry the phosphoserine; by autocatalysis modification. Thr-234 is modified (phosphothreonine; by autocatalysis). In terms of domain architecture, AGC-kinase C-terminal spans 338–408 (EGVDWERLAS…TSGSHSPESS (71 aa)). Coiled-coil stretches lie at residues 406-678 (ESSS…SNWE) and 730-802 (KARR…RARG). 4 disordered regions span residues 467 to 486 (KASL…QDSD), 655 to 675 (ELAQ…ETES), 801 to 849 (RGPV…PEGR), and 863 to 886 (TANT…PRSF). Basic and acidic residues predominate over residues 655–674 (ELAQEQESKQRLEGERRETE). Positions 835-849 (ATRHGGEPDLRPEGR) are enriched in basic and acidic residues. Residues 878–927 (SHTLRPRSFPSPTKCLRCTSLMLGLGRQGLGCDACGYFCHTTCAPQAPPC) form a Phorbol-ester/DAG-type zinc finger. In terms of domain architecture, PH spans 947–1066 (GTAYEGFLSV…WLQVLGELQR (120 aa)). The 275-residue stretch at 1092 to 1366 (LPHTLCAAIL…RPLNPEGSLF (275 aa)) folds into the CNH domain. The CRIB domain maps to 1437-1450 (ISPPTNFNHLVHVG). Residues 1442-1551 (NFNHLVHVGP…PLSPELESSP (110 aa)) are disordered. The segment covering 1457–1470 (GARDKSPAPEEKGR) has biased composition (basic and acidic residues). Residue Ser-1482 is modified to Phosphoserine. Residues 1511–1533 (TSLSSESVSCPQGSLSPATSLMQ) show a composition bias toward polar residues. Residues 1540–1551 (SLPLSPELESSP) are compositionally biased toward low complexity.

This sequence belongs to the protein kinase superfamily. AGC Ser/Thr protein kinase family. DMPK subfamily. As to quaternary structure, homodimer and homotetramer via the coiled coil regions. Interacts tightly with GTP-bound but not GDP-bound CDC42. Mg(2+) is required as a cofactor. As to expression, expressed in heart and skeletal muscle.

It is found in the cytoplasm. It carries out the reaction L-seryl-[protein] + ATP = O-phospho-L-seryl-[protein] + ADP + H(+). It catalyses the reaction L-threonyl-[protein] + ATP = O-phospho-L-threonyl-[protein] + ADP + H(+). With respect to regulation, maintained in an inactive, closed conformation by an interaction between the kinase domain and the negative autoregulatory C-terminal coiled-coil region. Agonist binding to the phorbol ester binding site disrupts this, releasing the kinase domain to allow N-terminus-mediated dimerization and kinase activation by transautophosphorylation. In terms of biological role, may act as a downstream effector of CDC42 in cytoskeletal reorganization. Contributes to the actomyosin contractility required for cell invasion, through the regulation of MYPT1 and thus MLC2 phosphorylation. In Homo sapiens (Human), this protein is Serine/threonine-protein kinase MRCK gamma.